Consider the following 274-residue polypeptide: MTKKLINQFKSFQVHPYHLVEPSPWPLGASVACLILTLGGVMKFHGFAAGDIGLPLGLILVLASMLLWWRDVIREATYQGHHTKTVKYGITLGVVLFIVSEILLFFSLFWAFFHSSLAPSVELGSTWPPVGIEPLNPFEVPLLNTIILLTSGCTITVSHAKIISGDRGATILYLILTILLAWMFLGLQWVEYVNAPFTIADSVYGSTFFVATGFHGLHVMIGTIFLTVSLNRILSYHLTSGHHLGYEAAIWYWHVVDVIWLFLYVSVYYWGSNV.

The next 7 membrane-spanning stretches (helical) occupy residues 22–42 (PSPW…GGVM), 47–67 (FAAG…SMLL), 93–113 (GVVL…WAFF), 137–157 (PFEV…TITV), 170–190 (TILY…LQWV), 208–228 (FFVA…FLTV), and 248–268 (AAIW…VSVY).

This sequence belongs to the cytochrome c oxidase subunit 3 family. Component of the cytochrome c oxidase (complex IV, CIV), a multisubunit enzyme composed of a catalytic core of 3 subunits and several supernumerary subunits. The complex exists as a monomer or a dimer and forms supercomplexes (SCs) in the inner mitochondrial membrane with ubiquinol-cytochrome c oxidoreductase (cytochrome b-c1 complex, complex III, CIII).

The protein localises to the mitochondrion inner membrane. The enzyme catalyses 4 Fe(II)-[cytochrome c] + O2 + 8 H(+)(in) = 4 Fe(III)-[cytochrome c] + 2 H2O + 4 H(+)(out). Its function is as follows. Component of the cytochrome c oxidase, the last enzyme in the mitochondrial electron transport chain which drives oxidative phosphorylation. The respiratory chain contains 3 multisubunit complexes succinate dehydrogenase (complex II, CII), ubiquinol-cytochrome c oxidoreductase (cytochrome b-c1 complex, complex III, CIII) and cytochrome c oxidase (complex IV, CIV), that cooperate to transfer electrons derived from NADH and succinate to molecular oxygen, creating an electrochemical gradient over the inner membrane that drives transmembrane transport and the ATP synthase. Cytochrome c oxidase is the component of the respiratory chain that catalyzes the reduction of oxygen to water. Electrons originating from reduced cytochrome c in the intermembrane space (IMS) are transferred via the dinuclear copper A center (CU(A)) of subunit 2 and heme A of subunit 1 to the active site in subunit 1, a binuclear center (BNC) formed by heme A3 and copper B (CU(B)). The BNC reduces molecular oxygen to 2 water molecules using 4 electrons from cytochrome c in the IMS and 4 protons from the mitochondrial matrix. The polypeptide is Cytochrome c oxidase subunit 3 (COX3) (Allomyces macrogynus).